Reading from the N-terminus, the 63-residue chain is Anaphase-promoting complex subunit 13 (63 aa).

The interval 36–63 is disordered; the sequence is KTDDTEETNQETQQADAETWRDLALDTQ. Residues 53–63 show a composition bias toward basic and acidic residues; sequence ETWRDLALDTQ.

The protein belongs to the APC13 family. Component of the anaphase promoting complex/cyclosome (APC/C) complex. Expressed constitutively in roots, leaves, stems, buds, flowers, and seeds.

It is found in the nucleus. It functions in the pathway protein modification; protein ubiquitination. Functionally, component of the anaphase promoting complex/cyclosome (APC/C), a cell cycle-regulated E3 ubiquitin ligase that controls progression through mitosis and the G1 phase of the cell cycle. The APC/C complex acts by mediating ubiquitination and subsequent degradation of target proteins. Regulates global growth and development, including phyllotaxis and apical dominance. Required for pollen maturation. Promotes (pri) miRNA transcription of each MIR159 genes. This is Anaphase-promoting complex subunit 13 from Arabidopsis thaliana (Mouse-ear cress).